A 99-amino-acid chain; its full sequence is High mobility group nucleosome-binding domain-containing protein 3 (99 aa).

Composition is skewed to basic and acidic residues over residues 1–25 and 39–53; these read MPKRKSPENTEGKDGTKLTKQEPTR and PESKPRKTSAKKEPG. The disordered stretch occupies residues 1-99; that stretch reads MPKRKSPENT…RTESIEKEGE (99 aa). Position 6 is a phosphoserine (Ser6). Thr10 carries the post-translational modification Phosphothreonine. Phosphoserine occurs at positions 78 and 93. The segment covering 83 to 99 has biased composition (basic and acidic residues); sequence TKVEEAQRTESIEKEGE.

The protein belongs to the HMGN family. As to quaternary structure, interacts with the ligand binding domain of the thyroid receptor (TR) (in vitro). Requires the presence of thyroid hormone for its interaction. Interacts with transcriptional regulator SEHBP. Interacts with nucleosomes. Expressed in the brain, eye, prostate, thyroid, kidney, testis, glial cells and insulin-producing cells of the Langerhans pancreatic islets. In the brain, expressed in the lateral olfactory tract, anterior commissure, corpus callosum, internal capsule, fornix, stria medullans, optic tract, axon bundles, Purkinje cell layer and granular layer of the cerebellum. In retina, expressed in the nuclei of cells in the inner nuclear layer including amacrine, bipolar and horizontal neurons and in the nuclei of ganglion neurons. Detected at low levels in the liver.

It is found in the nucleus. Its function is as follows. Binds to nucleosomes, regulating chromatin structure and consequently, chromatin-dependent processes such as transcription, DNA replication and DNA repair. Affects both insulin and glucagon levels and modulates the expression of pancreatic genes involved in insulin secretion. Regulates the expression of the glucose transporter SLC2A2 by binding specifically to its promoter region and recruiting PDX1 and additional transcription factors. Regulates the expression of SLC6A9, a glycine transporter which regulates the glycine concentration in synaptic junctions in the central nervous system, by binding to its transcription start site. May play a role in ocular development and astrocyte function. This Mus musculus (Mouse) protein is High mobility group nucleosome-binding domain-containing protein 3 (Hmgn3).